Consider the following 287-residue polypeptide: Protease HtpX (287 aa).

A run of 2 helical transmembrane segments spans residues 4-24 (ILLF…VLNI) and 36-56 (LSGL…ISLL). His143 lines the Zn(2+) pocket. Glu144 is a catalytic residue. Residue His147 participates in Zn(2+) binding. 2 helical membrane passes run 158–178 (LMQG…ANIV) and 192–212 (MVYF…ASFI). A Zn(2+)-binding site is contributed by Glu221.

Belongs to the peptidase M48B family. It depends on Zn(2+) as a cofactor.

Its subcellular location is the cell inner membrane. In Vibrio cholerae serotype O1 (strain ATCC 39315 / El Tor Inaba N16961), this protein is Protease HtpX.